The following is a 205-amino-acid chain: Small ribosomal subunit protein uS4 (205 aa).

The segment covering 1–16 has biased composition (basic and acidic residues); sequence MSKRESSKYKIDRRMG. The tract at residues 1–46 is disordered; it reads MSKRESSKYKIDRRMGENIWGRPKSPVNRREYGPGQHGQRRKSKLS. One can recognise an S4 RNA-binding domain in the interval 94–157; sequence SRLDAIVYRA…KQLVTVLEAV (64 aa).

It belongs to the universal ribosomal protein uS4 family. As to quaternary structure, part of the 30S ribosomal subunit. Contacts protein S5. The interaction surface between S4 and S5 is involved in control of translational fidelity.

One of the primary rRNA binding proteins, it binds directly to 16S rRNA where it nucleates assembly of the body of the 30S subunit. Its function is as follows. With S5 and S12 plays an important role in translational accuracy. This is Small ribosomal subunit protein uS4 from Rhizobium meliloti (strain 1021) (Ensifer meliloti).